The primary structure comprises 289 residues: 2-hydroxy-6-oxononadienedioate/2-hydroxy-6-oxononatrienedioate hydrolase 1 (289 aa).

One can recognise an AB hydrolase-1 domain in the interval 39 to 275 (TVVMLHGSGP…RCGHWAQWEH (237 aa)). Catalysis depends on histidine 269, which acts as the Proton acceptor.

The protein belongs to the AB hydrolase superfamily. MhpC family. As to quaternary structure, homodimer.

It catalyses the reaction (2Z,4E)-2-hydroxy-6-oxonona-2,4-dienedioate + H2O = (2Z)-2-hydroxypenta-2,4-dienoate + succinate + H(+). The catalysed reaction is (2Z,4E,7E)-2-hydroxy-6-oxonona-2,4,7-trienedioate + H2O = (2Z)-2-hydroxypenta-2,4-dienoate + fumarate + H(+). It functions in the pathway aromatic compound metabolism; 3-phenylpropanoate degradation. Its function is as follows. Catalyzes the cleavage of the C5-C6 bond of 2-hydroxy-6-oxononadienedioate and 2-hydroxy-6-oxononatrienedioate, a dienol ring fission product of the bacterial meta-cleavage pathway for degradation of phenylpropionic acid. In Dechloromonas aromatica (strain RCB), this protein is 2-hydroxy-6-oxononadienedioate/2-hydroxy-6-oxononatrienedioate hydrolase 1.